Consider the following 281-residue polypeptide: Bifunctional protein FolD (281 aa).

Residues 165–167 and Ser-190 each bind NADP(+); that span reads GRS.

Belongs to the tetrahydrofolate dehydrogenase/cyclohydrolase family. Homodimer.

The enzyme catalyses (6R)-5,10-methylene-5,6,7,8-tetrahydrofolate + NADP(+) = (6R)-5,10-methenyltetrahydrofolate + NADPH. It catalyses the reaction (6R)-5,10-methenyltetrahydrofolate + H2O = (6R)-10-formyltetrahydrofolate + H(+). It functions in the pathway one-carbon metabolism; tetrahydrofolate interconversion. In terms of biological role, catalyzes the oxidation of 5,10-methylenetetrahydrofolate to 5,10-methenyltetrahydrofolate and then the hydrolysis of 5,10-methenyltetrahydrofolate to 10-formyltetrahydrofolate. The chain is Bifunctional protein FolD from Polaromonas sp. (strain JS666 / ATCC BAA-500).